The primary structure comprises 120 residues: NAD(P)H-quinone oxidoreductase subunit 3, chloroplastic (120 aa).

3 consecutive transmembrane segments (helical) span residues 9 to 29, 64 to 84, and 88 to 108; these read IFWA…LISG, MFAL…PWAM, and VLGV…ILGL.

This sequence belongs to the complex I subunit 3 family. In terms of assembly, NDH is composed of at least 16 different subunits, 5 of which are encoded in the nucleus.

The protein localises to the plastid. Its subcellular location is the chloroplast thylakoid membrane. The enzyme catalyses a plastoquinone + NADH + (n+1) H(+)(in) = a plastoquinol + NAD(+) + n H(+)(out). It carries out the reaction a plastoquinone + NADPH + (n+1) H(+)(in) = a plastoquinol + NADP(+) + n H(+)(out). In terms of biological role, NDH shuttles electrons from NAD(P)H:plastoquinone, via FMN and iron-sulfur (Fe-S) centers, to quinones in the photosynthetic chain and possibly in a chloroplast respiratory chain. The immediate electron acceptor for the enzyme in this species is believed to be plastoquinone. Couples the redox reaction to proton translocation, and thus conserves the redox energy in a proton gradient. This chain is NAD(P)H-quinone oxidoreductase subunit 3, chloroplastic, found in Arabis hirsuta (Hairy rock-cress).